The primary structure comprises 316 residues: Ribonuclease Z (316 aa).

Residues His63, His65, Asp67, His68, His143, Asp213, and His271 each coordinate Zn(2+). Asp67 serves as the catalytic Proton acceptor.

Belongs to the RNase Z family. Homodimer. Zn(2+) is required as a cofactor.

The enzyme catalyses Endonucleolytic cleavage of RNA, removing extra 3' nucleotides from tRNA precursor, generating 3' termini of tRNAs. A 3'-hydroxy group is left at the tRNA terminus and a 5'-phosphoryl group is left at the trailer molecule.. In terms of biological role, zinc phosphodiesterase, which displays some tRNA 3'-processing endonuclease activity. Probably involved in tRNA maturation, by removing a 3'-trailer from precursor tRNA. The sequence is that of Ribonuclease Z from Bacteroides thetaiotaomicron (strain ATCC 29148 / DSM 2079 / JCM 5827 / CCUG 10774 / NCTC 10582 / VPI-5482 / E50).